Here is a 456-residue protein sequence, read N- to C-terminus: Adenylosuccinate synthetase isozyme 2 (456 aa).

Residues 1–14 (MSISESSPAATSLP) are compositionally biased toward polar residues. The disordered stretch occupies residues 1 to 24 (MSISESSPAATSLPNGDCGRPRAR). Residues 39 to 45 (GDEGKGK) and 67 to 69 (GHT) contribute to the GTP site. Asp40 acts as the Proton acceptor in catalysis. The Mg(2+) site is built by Asp40 and Gly67. Residue Asp40 coordinates substrate. IMP-binding positions include 40 to 43 (DEGK), 65 to 68 (NAGH), Thr162, Arg176, Asn255, Thr270, and Arg334. His68 (proton donor) is an active-site residue. Residue 330 to 336 (VTTGRKR) participates in substrate binding. GTP-binding positions include Arg336, 362–364 (KLD), and 444–447 (GVGK).

It belongs to the adenylosuccinate synthetase family. In terms of assembly, homodimer. Mg(2+) serves as cofactor.

It localises to the cytoplasm. Its subcellular location is the mitochondrion. The enzyme catalyses IMP + L-aspartate + GTP = N(6)-(1,2-dicarboxyethyl)-AMP + GDP + phosphate + 2 H(+). It participates in purine metabolism; AMP biosynthesis via de novo pathway; AMP from IMP: step 1/2. Inhibited competitively by AMP and IMP and non-competitively by fructose 1,6-bisphosphate. In terms of biological role, plays an important role in the de novo pathway and in the salvage pathway of purine nucleotide biosynthesis. Catalyzes the first committed step in the biosynthesis of AMP from IMP. The chain is Adenylosuccinate synthetase isozyme 2 (Adss2) from Mus musculus (Mouse).